Reading from the N-terminus, the 413-residue chain is Cardiolipin synthase B (413 aa).

PLD phosphodiesterase domains are found at residues 108 to 135 and 285 to 312; these read VFRR…SSEH and RRRP…DPLS. Residues His113, Lys115, Asp120, His290, Lys292, and Asp297 contribute to the active site. Residues 388–413 are disordered; it reads TQVDPPAQPTMETQDRVETENTGVNP.

The protein belongs to the phospholipase D family. Cardiolipin synthase subfamily. ClsB sub-subfamily.

It localises to the cell membrane. The catalysed reaction is 2 a 1,2-diacyl-sn-glycero-3-phospho-(1'-sn-glycerol) = a cardiolipin + glycerol. Its function is as follows. Catalyzes the phosphatidyl group transfer from one phosphatidylglycerol molecule to another to form cardiolipin (CL) (diphosphatidylglycerol) and glycerol. The chain is Cardiolipin synthase B from Shigella flexneri.